Reading from the N-terminus, the 139-residue chain is Large ribosomal subunit protein uL16c (139 aa).

Residues methionine 1–methionine 17 show a composition bias toward basic residues. The interval methionine 1–lysine 23 is disordered.

The protein belongs to the universal ribosomal protein uL16 family. As to quaternary structure, part of the 50S ribosomal subunit.

It is found in the plastid. The protein resides in the chloroplast. This is Large ribosomal subunit protein uL16c from Porphyra purpurea (Red seaweed).